The chain runs to 79 residues: Small ribosomal subunit protein bS16 (79 aa).

Belongs to the bacterial ribosomal protein bS16 family.

The protein is Small ribosomal subunit protein bS16 of Solidesulfovibrio magneticus (strain ATCC 700980 / DSM 13731 / RS-1) (Desulfovibrio magneticus).